We begin with the raw amino-acid sequence, 307 residues long: Pantothenate kinase (307 aa).

90–97 (GSVAVGKS) contributes to the ATP binding site.

This sequence belongs to the prokaryotic pantothenate kinase family.

Its subcellular location is the cytoplasm. The enzyme catalyses (R)-pantothenate + ATP = (R)-4'-phosphopantothenate + ADP + H(+). The protein operates within cofactor biosynthesis; coenzyme A biosynthesis; CoA from (R)-pantothenate: step 1/5. The sequence is that of Pantothenate kinase from Limosilactobacillus reuteri subsp. reuteri (strain JCM 1112) (Lactobacillus reuteri).